We begin with the raw amino-acid sequence, 155 residues long: Small ribosomal subunit protein uS7cz/uS7cy (155 aa).

This sequence belongs to the universal ribosomal protein uS7 family. Part of the 30S ribosomal subunit.

The protein resides in the plastid. The protein localises to the chloroplast. Its function is as follows. One of the primary rRNA binding proteins, it binds directly to 16S rRNA where it nucleates assembly of the head domain of the 30S subunit. The sequence is that of Small ribosomal subunit protein uS7cz/uS7cy (rps7-A) from Populus trichocarpa (Western balsam poplar).